The following is a 1128-amino-acid chain: Exportin-6 (1128 aa).

The 67-residue stretch at 31–97 (IEELLNSFAG…RSCLPKLLLS (67 aa)) folds into the Importin N-terminal domain.

It belongs to the exportin family.

The protein localises to the nucleus. The protein resides in the cytoplasm. Functionally, mediates the nuclear export of actin and profilin-actin complexes in somatic cells. The sequence is that of Exportin-6 (xpo6) from Danio rerio (Zebrafish).